A 22-amino-acid chain; its full sequence is MLHHMTSRANLLLLRRGGSQRS.

The disordered stretch occupies residues 1–22; it reads MLHHMTSRANLLLLRRGGSQRS. Residues 11 to 22 show a composition bias toward low complexity; that stretch reads LLLLRRGGSQRS.

Its function is as follows. Involved in control of the biosynthesis of leucine. This chain is leu leader peptide (leuL), found in Corynebacterium glutamicum (strain ATCC 13032 / DSM 20300 / JCM 1318 / BCRC 11384 / CCUG 27702 / LMG 3730 / NBRC 12168 / NCIMB 10025 / NRRL B-2784 / 534).